The primary structure comprises 159 residues: Trafficking protein particle complex subunit 6A (159 aa).

Position 33 is a phosphoserine (Ser33).

This sequence belongs to the TRAPP small subunits family. BET3 subfamily. As to quaternary structure, part of the multisubunit transport protein particle (TRAPP) complex. Heterodimer with TRAPPC3. The heterodimer TRAPPC3-TRAPPC6A interacts with TRAPPC2L. Interacts with TRAPPC2L.

The protein localises to the golgi apparatus. It localises to the cis-Golgi network. Its subcellular location is the endoplasmic reticulum. In terms of biological role, may play a role in vesicular transport during the biogenesis of melanosomes. The chain is Trafficking protein particle complex subunit 6A from Homo sapiens (Human).